A 414-amino-acid polypeptide reads, in one-letter code: Enterobactin exporter EntS (414 aa).

The Cytoplasmic portion of the chain corresponds to 1–21 (MNRQSWLLNLSLLKTHPAFRA). Residues 22 to 42 (VFLARFISIVSLGLLGVAVPV) traverse the membrane as a helical segment. Topologically, residues 43-55 (QIQMMTHSTWQVG) are periplasmic. A helical membrane pass occupies residues 56 to 76 (LSVTLTGGAMFIGLMVGGVLA). Residues 77 to 83 (DRYERKK) are Cytoplasmic-facing. A helical transmembrane segment spans residues 84–104 (VILLARGTCGIGFIGLCVNAL). The Periplasmic portion of the chain corresponds to 105-109 (LPEPS). A helical transmembrane segment spans residues 110 to 130 (LLAIYLLGLWDGFFASLGVTA). Residues 131–156 (LLAATPALVGRENLMQAGAITMLTVR) lie on the Cytoplasmic side of the membrane. The chain crosses the membrane as a helical span at residues 157-177 (LGSVISPMLGGILLASGGVAW). Position 178 (Asn178) is a topological domain, periplasmic. Residues 179 to 199 (YGLAAAGTFITLLPLLTLPRL) traverse the membrane as a helical segment. The Cytoplasmic segment spans residues 200 to 218 (PVPPQPRENPFLALLAAFR). A helical membrane pass occupies residues 219-239 (FLLACPLIGGIALLGGLVTMA). At 240 to 256 (SAVRVLYPALAMSWQMS) the chain is on the periplasmic side. A helical membrane pass occupies residues 257–277 (AAQIGLLYAAIPLGAAIGALT). Over 278 to 287 (SGQLAHSVRP) the chain is Cytoplasmic. A helical transmembrane segment spans residues 288–307 (GLIMLVSTVGSFLAVGLFAI). Over 308 to 313 (MPVWIA) the chain is Periplasmic. A helical membrane pass occupies residues 314-336 (GVICLALFGWLSAISSLLQYTLL). Residues 337 to 356 (QTQTPENMLGRMNGLWTAQN) lie on the Cytoplasmic side of the membrane. Residues 357-377 (VTGDAIGAALLGGLGAMMTPV) traverse the membrane as a helical segment. A topological domain (periplasmic) is located at residue Ala378. The chain crosses the membrane as a helical span at residues 379–399 (SASVSGFGLVIIGLLLLLVLG). Over 400 to 414 (ELRRFRQTSPVSDAG) the chain is Cytoplasmic.

It belongs to the major facilitator superfamily. EntS (TC 2.A.1.38) family.

It is found in the cell inner membrane. Functionally, component of an export pathway for enterobactin. The sequence is that of Enterobactin exporter EntS from Salmonella paratyphi A (strain ATCC 9150 / SARB42).